The following is a 187-amino-acid chain: UPF0301 protein HS_0009 (187 aa).

The protein belongs to the UPF0301 (AlgH) family.

The polypeptide is UPF0301 protein HS_0009 (Histophilus somni (strain 129Pt) (Haemophilus somnus)).